Here is a 63-residue protein sequence, read N- to C-terminus: Large ribosomal subunit protein uL29 (63 aa).

This sequence belongs to the universal ribosomal protein uL29 family.

The sequence is that of Large ribosomal subunit protein uL29 from Yersinia enterocolitica serotype O:8 / biotype 1B (strain NCTC 13174 / 8081).